Here is a 606-residue protein sequence, read N- to C-terminus: MESIAAATFTPSRLAARPATPAAAAAPVRARAAVAAGGRRRTSRRGGVRCSAGKPEASAVINGSAAARAAEEDRRRFFEAAERGSGKGNLVPMWECIVSDHLTPVLAYRCLVPEDNMETPSFLFESVEQGPEGTTNVGRYSMVGAHPVMEVVAKEHKVTIMDHEKGKVTEQVVDDPMQIPRSMMEGWHPQQIDQLPDSFTGGWVGFFSYDTVRYVEKKKLPFSGAPQDDRNLPDVHLGLYDDVLVFDNVEKKVYVIHWVNLDRHATTEDAFQDGKSRLNLLLSKVHNSNVPKLSPGFVKLHTRQFGTPLNKSTMTSDEYKNAVMQAKEHIMAGDIFQIVLSQRFERRTYANPFEVYRALRIVNPSPYMAYVQARGCVLVASSPEILTRVRKGKIINRPLAGTVRRGKTEKEDEMQEQQLLSDEKQCAEHIMLVDLGRNDVGKVSKPGSVKVEKLMNIERYSHVMHISSTVSGELDDHLQSWDALRAALPVGTVSGAPKVKAMELIDELEVTRRGPYSGGLGGISFDGDMLIALALRTIVFSTAPSHNTMYSYKDTERRREWVAHLQAGAGIVADSSPDDEQRECENKAAALARAIDLAESAFVDKE.

The transit peptide at 1-49 (MESIAAATFTPSRLAARPATPAAAAAPVRARAAVAAGGRRRTSRRGGVR) directs the protein to the chloroplast.

It belongs to the anthranilate synthase component I family. As to quaternary structure, heterotetramer consisting of two non-identical subunits: a beta subunit and a large alpha subunit.

The protein resides in the plastid. It localises to the chloroplast. It catalyses the reaction chorismate + L-glutamine = anthranilate + pyruvate + L-glutamate + H(+). It participates in amino-acid biosynthesis; L-tryptophan biosynthesis; L-tryptophan from chorismate: step 1/5. Feedback inhibition by tryptophan. Part of a heterotetrameric complex that catalyzes the two-step biosynthesis of anthranilate, an intermediate in the biosynthesis of L-tryptophan. In the first step, the glutamine-binding beta subunit of anthranilate synthase (AS) provides the glutamine amidotransferase activity which generates ammonia as a substrate that, along with chorismate, is used in the second step, catalyzed by the large alpha subunit of AS to produce anthranilate. In Oryza sativa subsp. japonica (Rice), this protein is Anthranilate synthase alpha subunit 2, chloroplastic.